The primary structure comprises 621 residues: Stimulated by retinoic acid gene 6 protein-like (621 aa).

Residues M1–R21 are Extracellular-facing. N12 carries an N-linked (GlcNAc...) asparagine glycan. A helical membrane pass occupies residues E22–L42. The Cytoplasmic segment spans residues Q43–D53. Residues T54–F74 traverse the membrane as a helical segment. The Extracellular portion of the chain corresponds to S75–A110. Residues F111–L131 form a helical membrane-spanning segment. The Cytoplasmic portion of the chain corresponds to S132–L137. A helical transmembrane segment spans residues V138–I158. Residues S159–L173 are Extracellular-facing. The helical transmembrane segment at V174–F194 threads the bilayer. The Cytoplasmic portion of the chain corresponds to L195–G258. A helical membrane pass occupies residues T259 to L279. At H280–G321 the chain is on the extracellular side. Residues V322 to L342 traverse the membrane as a helical segment. Topologically, residues A343–Q383 are cytoplasmic. Residues I384–M404 form a helical membrane-spanning segment. The Extracellular portion of the chain corresponds to L405–G424. A helical transmembrane segment spans residues F425–I445. Topologically, residues A446–N476 are cytoplasmic. A helical membrane pass occupies residues Y477–I497. The Extracellular portion of the chain corresponds to S498 to C621. Residue T612 is modified to Phosphothreonine.

Glycosylated. In terms of tissue distribution, highly expressed in liver and small intestine. Also expressed in spleen, kidney, colon, stomach, placenta, adipose tissue and isolated adipocytes.

It localises to the cell membrane. Acts as a high-affinity cell-surface receptor for retinol-binding protein RBP4 and mediates RBP4-dependent retinol uptake in the liver. This is Stimulated by retinoic acid gene 6 protein-like from Mus musculus (Mouse).